The primary structure comprises 302 residues: MQKFDIKTFQGLILTLQDYWARQGCTIVQPLDMEVGAGTSHPMTCLRALGPEPMATAYVQPSRRPTDGRYGENPNRLQHYYQFQVVIKPSPDNIQELYLGSLKALGLDPTVHDIRFVEDNWENPTLGAWGLGWEVWLNGMEVTQFTYFQQVGGLECKPVTGEITYGLERLAMYIQGVDSVYDLVWSDGPLGKTTYGDVFHQNEVEQSTYNFEYADVDFLFACFEQYEKEARMLLELEHPLPLPAYERILKAAHSFNLLDARKAISVTERQRYILRIRTLTKMVAEAYYASREALGFPMCKKD.

It belongs to the class-II aminoacyl-tRNA synthetase family. As to quaternary structure, tetramer of two alpha and two beta subunits.

The protein resides in the cytoplasm. The enzyme catalyses tRNA(Gly) + glycine + ATP = glycyl-tRNA(Gly) + AMP + diphosphate. The protein is Glycine--tRNA ligase alpha subunit of Edwardsiella ictaluri (strain 93-146).